We begin with the raw amino-acid sequence, 253 residues long: MNEQGEAINNSAESRIQLESSWKAHVGNWLLRPEMRDLSAFLRARKVAGVSVYPPGSQIFAAFEATPFQRVKAVILGQDPYHGQGQAHGLCFSVRPGMPLPPSLLNIYKELEEDLGLLRPDHGCLLPWAKRGVLLLNAVLTVEDGRAGAHQGKGWEGFTDHVVDTLNREREGLVFMLWGSYAQAKGKVIDTRRHLVLKAAHPSPLSAHRGFLGCRHFSLCNQYLSQHGLGMVDWSLPPCIALDGAILNGRIAV.

The active-site Proton acceptor is Asp-79.

Belongs to the uracil-DNA glycosylase (UDG) superfamily. UNG family.

It is found in the cytoplasm. The catalysed reaction is Hydrolyzes single-stranded DNA or mismatched double-stranded DNA and polynucleotides, releasing free uracil.. In terms of biological role, excises uracil residues from the DNA which can arise as a result of misincorporation of dUMP residues by DNA polymerase or due to deamination of cytosine. The polypeptide is Uracil-DNA glycosylase (Xylella fastidiosa (strain 9a5c)).